The sequence spans 295 residues: Bifunctional protein FolD (295 aa).

Residues 166–168 (GRS), Ser195, and Ile236 contribute to the NADP(+) site.

It belongs to the tetrahydrofolate dehydrogenase/cyclohydrolase family. Homodimer.

It catalyses the reaction (6R)-5,10-methylene-5,6,7,8-tetrahydrofolate + NADP(+) = (6R)-5,10-methenyltetrahydrofolate + NADPH. The catalysed reaction is (6R)-5,10-methenyltetrahydrofolate + H2O = (6R)-10-formyltetrahydrofolate + H(+). It functions in the pathway one-carbon metabolism; tetrahydrofolate interconversion. Its function is as follows. Catalyzes the oxidation of 5,10-methylenetetrahydrofolate to 5,10-methenyltetrahydrofolate and then the hydrolysis of 5,10-methenyltetrahydrofolate to 10-formyltetrahydrofolate. This Prosthecochloris aestuarii (strain DSM 271 / SK 413) protein is Bifunctional protein FolD.